We begin with the raw amino-acid sequence, 512 residues long: Cercosporin MFS transporter CTB4 (512 aa).

The next 12 membrane-spanning stretches (helical) occupy residues 72-92, 110-130, 142-162, 170-190, 202-222, 230-250, 306-326, 343-363, 383-403, 407-427, 456-476, and 480-500; these read WVIT…SSVF, VVLG…IFWG, LLAG…ARSL, FLGG…LADI, TVGA…SVLV, WIAN…FPFL, ILLM…NFFL, ASLP…LLSF, LLLM…FAWT, TMNP…IHLI, LFAA…GVKW, and ILAL…YFGA.

Belongs to the major facilitator superfamily. CAR1 family.

It localises to the cell membrane. In terms of biological role, MFS transporter; part of the gene cluster that mediates the biosynthesis of cercosporin, a light-activated, non-host-selective toxin. The perylenequinone chromophore of cercosporin absorbs light energy to attain an electronically-activated triplet state and produces active oxygen species such as the hydroxyl radical, superoxide, hydrogen peroxide or singlet oxygen upon reaction with oxygen molecules. These reactive oxygen species cause damage to various cellular components including lipids, proteins and nucleic acids. Responsible for secretion and accumulation of cercosporin, but does not play any roles in self-protection against the toxicity of cercosporin. The protein is Cercosporin MFS transporter CTB4 of Cercospora nicotianae (Barn spot disease fungus).